The sequence spans 162 residues: MMNWRALSQTKQDRIWSEVNKIIKWKPGSRCHHIIPPDPYRVFDISSAMSSKAGHNDVSGVLSDLETSILKAFQLGTGKNDVMYALDWQHDGYTFSPHQAMPKDEFGEWPVPVFPNGDYYFFFHQDFSWGLLGDPWKCAITVFGEELLEAIDNDPPILFRNK.

This is an uncharacterized protein from Bacillus subtilis (strain 168).